We begin with the raw amino-acid sequence, 136 residues long: Small ribosomal subunit protein uS8 (136 aa).

It belongs to the universal ribosomal protein uS8 family. In terms of assembly, part of the 30S ribosomal subunit. Contacts proteins S5 and S12.

One of the primary rRNA binding proteins, it binds directly to 16S rRNA central domain where it helps coordinate assembly of the platform of the 30S subunit. The polypeptide is Small ribosomal subunit protein uS8 (Frankia alni (strain DSM 45986 / CECT 9034 / ACN14a)).